A 90-amino-acid polypeptide reads, in one-letter code: DNA-binding protein HU (90 aa).

Threonine 4 carries the phosphothreonine modification. The tract at residues 56–90 (AARKGRNPQTGEEMEIPASKVPAFKPGKALKDAVK) is disordered.

Belongs to the bacterial histone-like protein family. As to quaternary structure, homodimer.

Histone-like DNA-binding protein which is capable of wrapping DNA to stabilize it, and thus to prevent its denaturation under extreme environmental conditions. This is DNA-binding protein HU (hup) from Geobacillus stearothermophilus (Bacillus stearothermophilus).